Here is a 354-residue protein sequence, read N- to C-terminus: Nicotinate-nucleotide--dimethylbenzimidazole phosphoribosyltransferase (354 aa).

The Proton acceptor role is filled by Glu317.

This sequence belongs to the CobT family. Homodimer.

It carries out the reaction 5,6-dimethylbenzimidazole + nicotinate beta-D-ribonucleotide = alpha-ribazole 5'-phosphate + nicotinate + H(+). It functions in the pathway nucleoside biosynthesis; alpha-ribazole biosynthesis; alpha-ribazole from 5,6-dimethylbenzimidazole: step 1/2. Its function is as follows. Catalyzes the synthesis of alpha-ribazole-5'-phosphate from nicotinate mononucleotide (NAMN) and 5,6-dimethylbenzimidazole (DMB). The chain is Nicotinate-nucleotide--dimethylbenzimidazole phosphoribosyltransferase from Salmonella arizonae (strain ATCC BAA-731 / CDC346-86 / RSK2980).